Here is a 592-residue protein sequence, read N- to C-terminus: Guanylate-binding protein 1 (592 aa).

The interval 1–311 (MASEIHMTGP…NAISSGDLPC (311 aa)) is GTPase domain (Globular). One can recognise a GB1/RHD3-type G domain in the interval 35-278 (TQPMVVVAIV…FCSYIFSNSK (244 aa)). Residues 45 to 52 (GLYRTGKS), 67 to 69 (LGS), and 97 to 101 (DTEGL) each bind GTP. Position 156 is a phosphoserine; by PIM1 (serine 156). (Microbial infection) Glycyl lysine isopeptide (Lys-Gly) (interchain with G-Cter in ubiquitin) cross-links involve residues lysine 207, lysine 209, lysine 210, lysine 382, lysine 562, lysine 567, lysine 573, and lysine 587. Residue cysteine 589 is modified to Cysteine methyl ester. A lipid anchor (S-farnesyl cysteine) is attached at cysteine 589. Threonine 590 is modified (phosphothreonine; by PIM1). Positions 590–592 (TIS) are cleaved as a propeptide — removed in mature form.

This sequence belongs to the TRAFAC class dynamin-like GTPase superfamily. GB1/RHD3 GTPase family. GB1 subfamily. As to quaternary structure, homodimer; homodimerization occurs upon GTP-binding and is required for the second hydrolysis step from GDP to GMP. Undergoes conformational changes and oligomerization upon GTP-binding and hydrolysis. Heterodimer with other family members, including GBP2, GBP3, GBP4 and GBP5. Dimerization regulates subcellular location to membranous structures. Interacts with SQSTM1. Interacts (when phosphorylated) with 14-3-3 protein sigma (SFN); leading to GBP1 retention in the cytosol and inactivation. Isoprenylation is required for proper subcellular location. In terms of processing, phosphorylated at Ser-156 by PIM1 in absence of infection, inhibits GBP1: phosphorylation promotes interaction with 14-3-3 protein sigma (SFN), leading to GBP1 retention in the cytosol. Dephosphorylated in response to infection, liberating GBP1. Post-translationally, (Microbial infection) Ubiquitinated by S.flexneri IpaH9.8, leading to its degradation by the proteasome, thereby preventing its ability to promote host defense against bacterial infection.

The protein resides in the cytoplasmic vesicle membrane. Its subcellular location is the golgi apparatus membrane. The protein localises to the cell membrane. It localises to the cytoplasm. It is found in the cytosol. The protein resides in the secreted. It carries out the reaction GTP + H2O = GDP + phosphate + H(+). The enzyme catalyses GDP + H2O = GMP + phosphate + H(+). In terms of biological role, interferon (IFN)-inducible GTPase that plays important roles in innate immunity against a diverse range of bacterial, viral and protozoan pathogens. Hydrolyzes GTP to GMP in two consecutive cleavage reactions: GTP is first hydrolyzed to GDP and then to GMP in a processive manner. Following infection, recruited to the pathogen-containing vacuoles or vacuole-escaped bacteria and promotes both inflammasome assembly and autophagy. Acts as a positive regulator of inflammasome assembly by facilitating the detection of inflammasome ligands from pathogens. Involved in the lysis of pathogen-containing vacuoles, releasing pathogens into the cytosol. Following pathogen release in the cytosol, forms a protein coat in a GTPase-dependent manner that encapsulates pathogens and promotes the detection of ligands by pattern recognition receptors. Plays a key role in inflammasome assembly in response to infection by Gram-negative bacteria: following pathogen release in the cytosol, forms a protein coat that encapsulates Gram-negative bacteria and directly binds to lipopolysaccharide (LPS), disrupting the O-antigen barrier and unmasking lipid A that is that detected by the non-canonical inflammasome effector CASP4/CASP11. Also promotes recruitment of proteins that mediate bacterial cytolysis, leading to release double-stranded DNA (dsDNA) that activates the AIM2 inflammasome. Involved in autophagy by regulating bacteriolytic peptide generation via its interaction with ubiquitin-binding protein SQSTM1, which delivers monoubiquitinated proteins to autolysosomes for the generation of bacteriolytic peptides. Confers protection to several pathogens, including the bacterial pathogens L.monocytogenes and M.bovis BCG as well as the protozoan pathogen T.gondii. Exhibits antiviral activity against influenza virus. The protein is Guanylate-binding protein 1 of Homo sapiens (Human).